The sequence spans 300 residues: Lysophosphatidic acid:oleoyl-CoA acyltransferase 1 (300 aa).

Residues L33–L53 traverse the membrane as a helical segment. The HXXXXD motif signature appears at C101–D106.

This sequence belongs to the 1-acyl-sn-glycerol-3-phosphate acyltransferase family.

It is found in the lipid droplet. Its subcellular location is the endoplasmic reticulum membrane. The enzyme catalyses a 1-acyl-sn-glycero-3-phosphate + an acyl-CoA = a 1,2-diacyl-sn-glycero-3-phosphate + CoA. The catalysed reaction is 1-hexadecanoyl-sn-glycero-3-phosphate + (9Z)-octadecenoyl-CoA = 1-hexadecanoyl-2-(9Z-octadecenoyl)-sn-glycero-3-phosphate + CoA. Acyl-CoA-dependent lysophosphatidic acid acyltransferase with preference for oleoyl-CoA. Involved in triacylglyceride homeostasis and lipid droplet formation. Involved in vacuolar protein sorting. The protein is Lysophosphatidic acid:oleoyl-CoA acyltransferase 1 of Saccharomyces cerevisiae (strain ATCC 204508 / S288c) (Baker's yeast).